The chain runs to 255 residues: tRNA pseudouridine synthase A (255 aa).

Asp-52 functions as the Nucleophile in the catalytic mechanism. Tyr-111 provides a ligand contact to substrate.

The protein belongs to the tRNA pseudouridine synthase TruA family. In terms of assembly, homodimer.

The enzyme catalyses uridine(38/39/40) in tRNA = pseudouridine(38/39/40) in tRNA. In terms of biological role, formation of pseudouridine at positions 38, 39 and 40 in the anticodon stem and loop of transfer RNAs. The protein is tRNA pseudouridine synthase A of Cereibacter sphaeroides (strain ATCC 17029 / ATH 2.4.9) (Rhodobacter sphaeroides).